We begin with the raw amino-acid sequence, 517 residues long: Lysophosphatidylcholine acyltransferase 2B (517 aa).

N-linked (GlcNAc...) asparagine glycosylation is present at N29. The next 3 membrane-spanning stretches (helical) occupy residues 70 to 90 (IVFL…NLPI), 103 to 123 (LIKP…GFLI), and 137 to 157 (IFVV…VAGL). An HXXXXD motif motif is present at residues 143–148 (HSTFFD). EF-hand domains are found at residues 388–423 (PISE…LCNP) and 425–460 (NTEK…AFGV). Ca(2+) contacts are provided by D401, N403, D405, T407, E412, D438, D440, D442, Y444, and E449.

Belongs to the 1-acyl-sn-glycerol-3-phosphate acyltransferase family.

It localises to the membrane. It functions in the pathway lipid metabolism; phospholipid metabolism. Its function is as follows. Probable acetyltransferase. The sequence is that of Lysophosphatidylcholine acyltransferase 2B (Lpcat2b) from Rattus norvegicus (Rat).